A 472-amino-acid chain; its full sequence is UDP-N-acetylmuramate--L-alanine ligase (472 aa).

G121 to T127 contributes to the ATP binding site.

Belongs to the MurCDEF family.

The protein localises to the cytoplasm. It catalyses the reaction UDP-N-acetyl-alpha-D-muramate + L-alanine + ATP = UDP-N-acetyl-alpha-D-muramoyl-L-alanine + ADP + phosphate + H(+). It participates in cell wall biogenesis; peptidoglycan biosynthesis. Functionally, cell wall formation. The polypeptide is UDP-N-acetylmuramate--L-alanine ligase (Hahella chejuensis (strain KCTC 2396)).